The sequence spans 131 residues: Neurophysin 2 (131 aa).

7 disulfides stabilise this stretch: C10-C55, C13-C27, C21-C45, C28-C35, C62-C74, C68-C86, and C75-C80.

It belongs to the vasopressin/oxytocin family.

Its subcellular location is the secreted. In terms of biological role, neurophysin 2 specifically binds vasopressin. The chain is Neurophysin 2 from Anser anser anser (Western greylag goose).